We begin with the raw amino-acid sequence, 321 residues long: Putative membrane-bound redox modulator Alx (321 aa).

The Periplasmic portion of the chain corresponds to 1–6 (MNTVGT). A helical transmembrane segment spans residues 7–27 (PLLWGGFAVVVAIMLAIDLLL). Over 28 to 43 (QGRRGAHAMTMKQAAA) the chain is Cytoplasmic. Residues 44 to 64 (WSLVWVTLSLLFNAAFWWYLV) traverse the membrane as a helical segment. Topologically, residues 65–89 (QTEGRAVADPQALAFLTGYLIEKSL) are periplasmic. The chain crosses the membrane as a helical span at residues 90 to 110 (AVDNVFVWLMLFSYFSVPAAL). Topologically, residues 111 to 113 (QRR) are cytoplasmic. A helical transmembrane segment spans residues 114 to 134 (VLVYGVLGAIVLRTIMIFTGS). Residue Trp135 is a topological domain, periplasmic. A helical membrane pass occupies residues 136-156 (LISQFDWILYIFGAFLLFTGV). At 157 to 198 (KMALAHEDESGIGDKPLVRWLRGHLRMTDTIDNEHFFVRKNG) the chain is on the cytoplasmic side. Residues 199–219 (LLYATPLMLVLILVELSDVIF) traverse the membrane as a helical segment. Residues 220 to 225 (AVDSIP) lie on the Periplasmic side of the membrane. The chain crosses the membrane as a helical span at residues 226-246 (AIFAVTTDPFIVLTSNLFAIL). Residues 247–261 (GLRAMYFLLAGVAER) lie on the Cytoplasmic side of the membrane. The chain crosses the membrane as a helical span at residues 262–282 (FSMLKYGLAVILVFIGIKMLI). Residues 283–286 (VDFY) lie on the Periplasmic side of the membrane. Residues 287 to 307 (HIPIAVSLGVVFGILVMTFII) traverse the membrane as a helical segment. The Cytoplasmic portion of the chain corresponds to 308–321 (NAWVNYRHDKQRGG).

It belongs to the TerC family.

Its subcellular location is the cell inner membrane. In terms of biological role, has been proposed to be a redox modulator. The chain is Putative membrane-bound redox modulator Alx from Escherichia coli (strain K12).